A 264-amino-acid chain; its full sequence is S-adenosylmethionine decarboxylase proenzyme (264 aa).

Catalysis depends on Ser-113, which acts as the Schiff-base intermediate with substrate; via pyruvic acid. Ser-113 is modified (pyruvic acid (Ser); by autocatalysis). The active-site Proton acceptor; for processing activity is the His-118. Cys-141 acts as the Proton donor; for catalytic activity in catalysis.

The protein belongs to the prokaryotic AdoMetDC family. Type 2 subfamily. As to quaternary structure, heterooctamer of four alpha and four beta chains arranged as a tetramer of alpha/beta heterodimers. It depends on pyruvate as a cofactor. Is synthesized initially as an inactive proenzyme. Formation of the active enzyme involves a self-maturation process in which the active site pyruvoyl group is generated from an internal serine residue via an autocatalytic post-translational modification. Two non-identical subunits are generated from the proenzyme in this reaction, and the pyruvate is formed at the N-terminus of the alpha chain, which is derived from the carboxyl end of the proenzyme. The post-translation cleavage follows an unusual pathway, termed non-hydrolytic serinolysis, in which the side chain hydroxyl group of the serine supplies its oxygen atom to form the C-terminus of the beta chain, while the remainder of the serine residue undergoes an oxidative deamination to produce ammonia and the pyruvoyl group blocking the N-terminus of the alpha chain.

The catalysed reaction is S-adenosyl-L-methionine + H(+) = S-adenosyl 3-(methylsulfanyl)propylamine + CO2. It functions in the pathway amine and polyamine biosynthesis; S-adenosylmethioninamine biosynthesis; S-adenosylmethioninamine from S-adenosyl-L-methionine: step 1/1. In terms of biological role, catalyzes the decarboxylation of S-adenosylmethionine to S-adenosylmethioninamine (dcAdoMet), the propylamine donor required for the synthesis of the polyamines spermine and spermidine from the diamine putrescine. The chain is S-adenosylmethionine decarboxylase proenzyme from Xanthomonas euvesicatoria pv. vesicatoria (strain 85-10) (Xanthomonas campestris pv. vesicatoria).